Here is a 338-residue protein sequence, read N- to C-terminus: MENDHGILSDHPSGEEESQVEITLRPQKLREYIGQPKIKHELEVYIKAAQSREEALDHVLLYGPPGLGKTTLAMVIANEMGVNIRTTSGPAIEKPGDLVALLNELKPGDVLFVDEIHRLPKVVEEMLYSAMEDYYIDIVIGEGPTAHPVHFPLPPFTLIGATTRAGMLSAPLRDRFGIVEHMNYYTQDELTKIIFRSAKIFHTSIQDEGAHELSLRSRGTPRIANRLLKRVRDFAQVAGKQSIDSAIVKQALSLLQVDDRGLDEIDRKMLLTMINFYHGGPVGLKTIAANIGEETNTIEEMYEPYLLQIGFISRTPRGRLVTPTAYEHLGIEYPTDKN.

Positions 1–14 are enriched in basic and acidic residues; the sequence is MENDHGILSDHPSG. The segment at 1–21 is disordered; the sequence is MENDHGILSDHPSGEEESQVE. The interval 3 to 185 is large ATPase domain (RuvB-L); the sequence is NDHGILSDHP…FGIVEHMNYY (183 aa). ATP contacts are provided by residues L24, R25, G66, K69, T70, T71, 132–134, R175, Y185, and R222; that span reads EDY. T70 contacts Mg(2+). Residues 186–256 are small ATPAse domain (RuvB-S); it reads TQDELTKIIF…IVKQALSLLQ (71 aa). The interval 259-338 is head domain (RuvB-H); sequence DRGLDEIDRK…LGIEYPTDKN (80 aa). Positions 314 and 319 each coordinate DNA.

The protein belongs to the RuvB family. Homohexamer. Forms an RuvA(8)-RuvB(12)-Holliday junction (HJ) complex. HJ DNA is sandwiched between 2 RuvA tetramers; dsDNA enters through RuvA and exits via RuvB. An RuvB hexamer assembles on each DNA strand where it exits the tetramer. Each RuvB hexamer is contacted by two RuvA subunits (via domain III) on 2 adjacent RuvB subunits; this complex drives branch migration. In the full resolvosome a probable DNA-RuvA(4)-RuvB(12)-RuvC(2) complex forms which resolves the HJ.

It localises to the cytoplasm. The enzyme catalyses ATP + H2O = ADP + phosphate + H(+). Its function is as follows. The RuvA-RuvB-RuvC complex processes Holliday junction (HJ) DNA during genetic recombination and DNA repair, while the RuvA-RuvB complex plays an important role in the rescue of blocked DNA replication forks via replication fork reversal (RFR). RuvA specifically binds to HJ cruciform DNA, conferring on it an open structure. The RuvB hexamer acts as an ATP-dependent pump, pulling dsDNA into and through the RuvAB complex. RuvB forms 2 homohexamers on either side of HJ DNA bound by 1 or 2 RuvA tetramers; 4 subunits per hexamer contact DNA at a time. Coordinated motions by a converter formed by DNA-disengaged RuvB subunits stimulates ATP hydrolysis and nucleotide exchange. Immobilization of the converter enables RuvB to convert the ATP-contained energy into a lever motion, pulling 2 nucleotides of DNA out of the RuvA tetramer per ATP hydrolyzed, thus driving DNA branch migration. The RuvB motors rotate together with the DNA substrate, which together with the progressing nucleotide cycle form the mechanistic basis for DNA recombination by continuous HJ branch migration. Branch migration allows RuvC to scan DNA until it finds its consensus sequence, where it cleaves and resolves cruciform DNA. The chain is Holliday junction branch migration complex subunit RuvB from Limosilactobacillus reuteri (strain DSM 20016) (Lactobacillus reuteri).